The primary structure comprises 226 residues: ATP-dependent dethiobiotin synthetase BioD (226 aa).

13–18 serves as a coordination point for ATP; it reads DVGKTL. Mg(2+) is bound at residue Thr17. Residue Lys38 is part of the active site. Residues Asp55, 117 to 120, 177 to 178, 206 to 208, and Glu213 contribute to the ATP site; these read EGAG, NR, and PFV. Positions 55 and 117 each coordinate Mg(2+).

The protein belongs to the dethiobiotin synthetase family. In terms of assembly, homodimer. It depends on Mg(2+) as a cofactor.

The protein localises to the cytoplasm. It catalyses the reaction (7R,8S)-7,8-diammoniononanoate + CO2 + ATP = (4R,5S)-dethiobiotin + ADP + phosphate + 3 H(+). It participates in cofactor biosynthesis; biotin biosynthesis; biotin from 7,8-diaminononanoate: step 1/2. Functionally, catalyzes a mechanistically unusual reaction, the ATP-dependent insertion of CO2 between the N7 and N8 nitrogen atoms of 7,8-diaminopelargonic acid (DAPA, also called 7,8-diammoniononanoate) to form a ureido ring. The protein is ATP-dependent dethiobiotin synthetase BioD of Aeromonas hydrophila subsp. hydrophila (strain ATCC 7966 / DSM 30187 / BCRC 13018 / CCUG 14551 / JCM 1027 / KCTC 2358 / NCIMB 9240 / NCTC 8049).